The sequence spans 194 residues: Orotate phosphoribosyltransferase (194 aa).

Position 117–125 (117–125 (EDIVSTGLS)) interacts with 5-phospho-alpha-D-ribose 1-diphosphate. Orotate-binding residues include Ser121 and Arg149.

The protein belongs to the purine/pyrimidine phosphoribosyltransferase family. PyrE subfamily. In terms of assembly, homodimer. It depends on Mg(2+) as a cofactor.

It carries out the reaction orotidine 5'-phosphate + diphosphate = orotate + 5-phospho-alpha-D-ribose 1-diphosphate. Its pathway is pyrimidine metabolism; UMP biosynthesis via de novo pathway; UMP from orotate: step 1/2. Functionally, catalyzes the transfer of a ribosyl phosphate group from 5-phosphoribose 1-diphosphate to orotate, leading to the formation of orotidine monophosphate (OMP). The polypeptide is Orotate phosphoribosyltransferase (Maricaulis maris (strain MCS10) (Caulobacter maris)).